The sequence spans 513 residues: Cytochrome P450 86A1 (513 aa).

Residues 7 to 27 (ILTGYAVAALSVYALWFYFLS) traverse the membrane as a helical segment. Residue Cys-456 participates in heme binding.

It belongs to the cytochrome P450 family. Heme serves as cofactor. Expressed in roots.

The protein localises to the membrane. The catalysed reaction is an omega-methyl-long-chain fatty acid + reduced [NADPH--hemoprotein reductase] + O2 = an omega-hydroxy-long-chain fatty acid + oxidized [NADPH--hemoprotein reductase] + H2O + H(+). In terms of biological role, catalyzes the omega-hydroxylation of various fatty acids (FA). Acts on saturated and unsaturated fatty acids with chain lengths from C12 to C18 but not on hexadecane. The chain is Cytochrome P450 86A1 (CYP86A1) from Arabidopsis thaliana (Mouse-ear cress).